Consider the following 280-residue polypeptide: Ycf3-interacting protein 1, chloroplastic (280 aa).

The N-terminal 62 residues, 1 to 62 (MTTQIFQLPL…NNRRFGSLIV (62 aa)), are a transit peptide targeting the chloroplast. The disordered stretch occupies residues 75 to 103 (PVPLTLEQQEKEKQNRDDEEDEIDEGDVD). Positions 91-103 (DDEEDEIDEGDVD) are enriched in acidic residues. Residues 255-275 (ALYFVSALPVIIGISVVLILF) traverse the membrane as a helical segment.

The protein belongs to the Y3IP1/CEST family. As to quaternary structure, interacts with Ycf3. Expressed in cotyledons, rosette and cauline leaves, stems and sepals.

Its subcellular location is the plastid. It localises to the chloroplast thylakoid membrane. Nuclear genome-encoded factor that participates in photosystem I (PSI) biogenesis. Cooperates with the plastid genome-encoded protein PSI assembly Ycf3 in the assembly of stable PSI units in the thylakoid membrane. Involved in light-induced chloroplast development and growth. Involved in the plant response to abiotic and photooxidative stresses. May be involved in the suppression of photooxidative damage. The protein is Ycf3-interacting protein 1, chloroplastic of Arabidopsis thaliana (Mouse-ear cress).